A 194-amino-acid chain; its full sequence is Protein GrpE (194 aa).

The segment covering 1–13 (MENTQENPTSQNP) has biased composition (polar residues). The interval 1-50 (MENTQENPTSQNPKPAEETARQAAEAAAPQQEAAANAATDSPASAEQAAL) is disordered. Residues 21-50 (RQAAEAAAPQQEAAANAATDSPASAEQAAL) show a composition bias toward low complexity.

The protein belongs to the GrpE family. In terms of assembly, homodimer.

It localises to the cytoplasm. In terms of biological role, participates actively in the response to hyperosmotic and heat shock by preventing the aggregation of stress-denatured proteins, in association with DnaK and GrpE. It is the nucleotide exchange factor for DnaK and may function as a thermosensor. Unfolded proteins bind initially to DnaJ; upon interaction with the DnaJ-bound protein, DnaK hydrolyzes its bound ATP, resulting in the formation of a stable complex. GrpE releases ADP from DnaK; ATP binding to DnaK triggers the release of the substrate protein, thus completing the reaction cycle. Several rounds of ATP-dependent interactions between DnaJ, DnaK and GrpE are required for fully efficient folding. The sequence is that of Protein GrpE from Paraburkholderia xenovorans (strain LB400).